Here is a 182-residue protein sequence, read N- to C-terminus: Adenylate kinase (182 aa).

Gly12–Thr17 lines the ATP pocket. An NMP region spans residues Ser32 to Val61. Residues Thr33, Arg38, Glu59–Val61, Gly85–Arg88, and Gln92 each bind AMP. The interval Ser126–Asp132 is LID. ATP is bound at residue Arg127. Positions 129 and 140 each coordinate AMP. Position 168 (Gly168) interacts with ATP.

This sequence belongs to the adenylate kinase family. As to quaternary structure, monomer.

The protein resides in the cytoplasm. The catalysed reaction is AMP + ATP = 2 ADP. Its pathway is purine metabolism; AMP biosynthesis via salvage pathway; AMP from ADP: step 1/1. Catalyzes the reversible transfer of the terminal phosphate group between ATP and AMP. Plays an important role in cellular energy homeostasis and in adenine nucleotide metabolism. This Prochlorococcus marinus (strain MIT 9313) protein is Adenylate kinase.